Consider the following 393-residue polypeptide: MPNRSFSPRTFMGDHGISIDYNNLEKIVAPKPWKPSHSRSTSTNCTKFVEESLFEEAGNEIQTIILHSFNIYDDSVDSNNNNNNNNNNNNNNKNDDYNFQPPIRQSLSSPQQLVSIRPTPTKPKLVSFLNNNSKVNNNNNNNKTIMTCKVNSKNNINSLVNNNNSKIAINIESCSNLRNNEIQIDDNENINTEYITPNNIVNNILKCKLETQTPTSSQPQTISFLDTFESRVSISPSYNNGQGAISGSEKGSEIITTIINNNNNNNNNNSNNNNNNNNSNNNDNNNNINTKVDESNSNDNILLSQTIDTITENHSDGTLDMKIPLFIHSYSPLNCFNGSEPLTPPIRTHNPITMNQAFTESDLFQQGAELGLLSISPPPTLSISKQFKSATLF.

Disordered regions lie at residues aspartate 77 to proline 118 and isoleucine 259 to asparagine 296. Residues asparagine 79–asparagine 92 show a composition bias toward low complexity. The segment covering isoleucine 103–valine 114 has biased composition (polar residues). A compositionally biased stretch (low complexity) spans isoleucine 259–asparagine 289.

This is an uncharacterized protein from Dictyostelium discoideum (Social amoeba).